The chain runs to 357 residues: MIETDKLAAKAVSAERLISASPASPNEEAFERALRPKLLDEYVGQEKVRGQLDIFMTAAKKRREALDHVLLFGPPGLGKTTLAHIIAREMGVNLRQTSGPVLERPGDLAALLTNLEANDVLFIDEIHRLSPVVEEILYPALEDYQIDIMIGEGPAARSVKLDLQPFTLVGATTRAGMLTNPLRDRFGIVARLEFYTPTELARIVTRSAGLLDARIAEDGALEIAKRSRGTPRIANRLLRRVRDYAEVKADGVITRAVADAALAMLDVDAVGFDLMDRKLLEAILHKFNGGPVGIDNLAAAIGEERDTIEDVLEPYLIQQGYLQRTPRGRVATASAYQHFGLGAPKTGPARDLWDNNA.

The large ATPase domain (RuvB-L) stretch occupies residues 4–195 (TDKLAAKAVS…FGIVARLEFY (192 aa)). ATP is bound by residues leucine 34, arginine 35, glycine 76, lysine 79, threonine 80, threonine 81, 142–144 (EDY), arginine 185, tyrosine 195, and arginine 232. Residue threonine 80 participates in Mg(2+) binding. Residues 196–266 (TPTELARIVT…VADAALAMLD (71 aa)) are small ATPAse domain (RuvB-S). Residues 269 to 357 (AVGFDLMDRK…PARDLWDNNA (89 aa)) are head domain (RuvB-H). The DNA site is built by arginine 305, arginine 324, and arginine 329.

Belongs to the RuvB family. Homohexamer. Forms an RuvA(8)-RuvB(12)-Holliday junction (HJ) complex. HJ DNA is sandwiched between 2 RuvA tetramers; dsDNA enters through RuvA and exits via RuvB. An RuvB hexamer assembles on each DNA strand where it exits the tetramer. Each RuvB hexamer is contacted by two RuvA subunits (via domain III) on 2 adjacent RuvB subunits; this complex drives branch migration. In the full resolvosome a probable DNA-RuvA(4)-RuvB(12)-RuvC(2) complex forms which resolves the HJ.

The protein localises to the cytoplasm. It catalyses the reaction ATP + H2O = ADP + phosphate + H(+). Functionally, the RuvA-RuvB-RuvC complex processes Holliday junction (HJ) DNA during genetic recombination and DNA repair, while the RuvA-RuvB complex plays an important role in the rescue of blocked DNA replication forks via replication fork reversal (RFR). RuvA specifically binds to HJ cruciform DNA, conferring on it an open structure. The RuvB hexamer acts as an ATP-dependent pump, pulling dsDNA into and through the RuvAB complex. RuvB forms 2 homohexamers on either side of HJ DNA bound by 1 or 2 RuvA tetramers; 4 subunits per hexamer contact DNA at a time. Coordinated motions by a converter formed by DNA-disengaged RuvB subunits stimulates ATP hydrolysis and nucleotide exchange. Immobilization of the converter enables RuvB to convert the ATP-contained energy into a lever motion, pulling 2 nucleotides of DNA out of the RuvA tetramer per ATP hydrolyzed, thus driving DNA branch migration. The RuvB motors rotate together with the DNA substrate, which together with the progressing nucleotide cycle form the mechanistic basis for DNA recombination by continuous HJ branch migration. Branch migration allows RuvC to scan DNA until it finds its consensus sequence, where it cleaves and resolves cruciform DNA. This is Holliday junction branch migration complex subunit RuvB from Ralstonia nicotianae (strain ATCC BAA-1114 / GMI1000) (Ralstonia solanacearum).